The primary structure comprises 449 residues: Protein adenylyltransferase FICD (449 aa).

A helical transmembrane segment spans residues 15-35 (LLWGWGPILFGLLGSVFVLLL). TPR repeat units lie at residues 96 to 129 (AKAA…NPEF) and 130 to 163 (VEAL…SPCH). An Inhibitory (S/T)XXXE(G/N) motif motif is present at residues 220 to 225 (TVAIEG). Residues E224, 250 to 251 (EQ), 358 to 360 (GNG), and R364 contribute to the ATP site. Positions 275–410 (ITVNDILEIH…VRPFIRFIAK (136 aa)) constitute a Fido domain.

It belongs to the fic family.

Its subcellular location is the membrane. It carries out the reaction L-tyrosyl-[protein] + ATP = O-(5'-adenylyl)-L-tyrosyl-[protein] + diphosphate. The enzyme catalyses L-threonyl-[protein] + ATP = 3-O-(5'-adenylyl)-L-threonyl-[protein] + diphosphate. Its activity is regulated as follows. Adenylyltransferase activity is inhibited by the inhibitory helix present at the N-terminus: Glu-224 binds ATP and competes with ATP-binding at Arg-364, thereby preventing adenylyltransferase activity. Activation dissociates ATP-binding from Glu-224, allowing ordered binding of the entire ATP moiety with the alpha-phosphate in an orientation that is productive for accepting an incoming target hydroxyl side chain. In terms of biological role, adenylyltransferase that mediates the addition of adenosine 5'-monophosphate (AMP) to specific residues of target proteins. The protein is Protein adenylyltransferase FICD (ficd) of Danio rerio (Zebrafish).